A 1615-amino-acid polypeptide reads, in one-letter code: Low-density lipoprotein receptor-related protein 5 (1615 aa).

The signal sequence occupies residues 1–31 (MEAAPPGPPWPLLLLLLLLLALCGCPAPAAA). Positions 32–288 (SPLLLFANRR…YSPMDIQVLS (257 aa)) are beta-propeller 1. The Extracellular segment spans residues 32–1384 (SPLLLFANRR…PPSDDSPAHS (1353 aa)). LDL-receptor class B repeat units follow at residues 75-119 (GAVY…DWVG), 120-162 (KKLY…DPAH), 163-206 (GYMY…DLEE), 207-247 (QKLY…TLSG), and 248-290 (DTLY…LSQE). The stretch at 78-81 (YWTD) is one YWTD 1 repeat. N-linked (GlcNAc...) asparagine glycosylation is present at Asn93. Residues 123-126 (YWTD) form a YWTD 2 repeat. Asn138 carries N-linked (GlcNAc...) asparagine glycosylation. Residues 166-169 (YWTD) form a YWTD 3 repeat. The stretch at 251–254 (YWTD) is one YWTD 4 repeat. The region spanning 295–337 (FHTRCEEDNGGCSHLCLLSPSEPFYTCACPTGVQLQDNGRTCK) is the EGF-like 1 domain. 3 disulfide bridges follow: Cys299-Cys310, Cys306-Cys321, and Cys323-Cys336. A beta-propeller 2 region spans residues 341–602 (EEVLLLARRT…AVNVAKVVGT (262 aa)). 5 LDL-receptor class B repeats span residues 385-427 (GYVY…DWVA), 428-470 (RNLY…HPVM), 471-514 (GLMY…DLQE), 515-557 (GKLY…LGDF), and 558-600 (IYWT…AKVV). 2 YWTD repeats span residues 388–391 (YWTD) and 431–434 (YWTD). An N-linked (GlcNAc...) asparagine glycan is attached at Asn446. The YWTD 7 repeat unit spans residues 474–477 (YWTD). An N-linked (GlcNAc...) asparagine glycan is attached at Asn499. A YWTD 8 repeat occupies 559 to 562 (YWTD). Residues 601–641 (GTNPCADRNGGCSHLCFFTPHATRCGCPIGLELLSDMKTCI) enclose the EGF-like 2 domain. 3 disulfide bridges follow: Cys605-Cys616, Cys612-Cys625, and Cys627-Cys640. The tract at residues 644–903 (EAFLVFTSRA…VFHSSRQDGL (260 aa)) is beta-propeller 3. LDL-receptor class B repeat units follow at residues 687–729 (NHIY…DWMG), 730–772 (KNLY…DPTK), 773–815 (GYIY…DYAD), 816–855 (QRLY…TQYS), and 856–898 (DYIY…FHSS). Residues 690 to 693 (YWTD) form a YWTD 9 repeat. A glycan (N-linked (GlcNAc...) asparagine) is linked at Asn705. YWTD repeat units lie at residues 819–822 (YWTD) and 859–862 (YWTD). Asn878 carries N-linked (GlcNAc...) asparagine glycosylation. Residues 902–942 (GLNDCMHNNGQCGQLCLAIPGGHRCGCASHYTLDPSSRNCS) form the EGF-like 3 domain. Disulfide bonds link Cys906-Cys917, Cys913-Cys926, and Cys928-Cys941. The beta-propeller 4 stretch occupies residues 945–1212 (TTFLLFSQKS…AVEEVSLEEF (268 aa)). LDL-receptor class B repeat units lie at residues 989 to 1035 (KFIY…DIYS), 1036 to 1078 (RTLF…NAER), 1079 to 1123 (GYLY…DNTL), 1124 to 1164 (GKLF…TILG), and 1165 to 1207 (KHLY…VEEV). The EGF-like 4 domain occupies 1213–1254 (SAHPCARDNGGCSHICIAKGDGTPRCSCPVHLVLLQNLLTCG). Intrachain disulfides connect Cys1217/Cys1228, Cys1224/Cys1238, Cys1240/Cys1253, Cys1259/Cys1273, Cys1266/Cys1286, Cys1280/Cys1295, Cys1298/Cys1310, Cys1305/Cys1323, Cys1317/Cys1332, Cys1336/Cys1348, Cys1343/Cys1361, and Cys1355/Cys1370. LDL-receptor class A domains lie at 1258 to 1296 (TCSP…EGCP), 1297 to 1333 (VCSA…ADCD), and 1335 to 1371 (ICLP…LMCE). Residues 1385 to 1407 (SAIGPVIGIILSLFVMGGVYFVC) traverse the membrane as a helical segment. The Cytoplasmic segment spans residues 1408–1615 (QRVVCQRYAG…PPPSPCTDSS (208 aa)). Positions 1475–1501 (RNHVTGASSSSSSSTKATLYPPILNPP) are disordered. The PPPSP motif A motif lies at 1500-1506 (PPPSPAT). The short motif at 1538-1545 (PPTTPCST) is the PPPSP motif B element. A disordered region spans residues 1568 to 1615 (SDSDPYPPPPTPHSQYLSAEDSCPPSPATERSYFHLFPPPPSPCTDSS). The PPPSP motif C signature appears at 1574 to 1581 (PPPPTPHS). The PPPSP motif D signature appears at 1591–1596 (PPSPAT). The span at 1604–1615 (FPPPPSPCTDSS) shows a compositional bias: pro residues. The PPPSP motif E signature appears at 1605–1612 (PPPPSPCT).

It belongs to the LDLR family. As to quaternary structure, homodimer; disulfide-linked. Forms phosphorylated oligomer aggregates on Wnt-signaling. Component of a Wnt-signaling complex that contains a WNT protein, a FZD protein and LRP5 or LRP6. Interacts with FZD8; the interaction is formed on WNT-binding and signaling. Interacts (via the phosphorylated PPPSP motif domains) with AXIN1; the interaction prevents inhibition of beta-catenin phosphorylation and signaling and is enhanced in the presence of GSK3B and WNT1 or WNT3A. Interacts (via beta-propeller regions 3 and 4) with DKK1; the interaction, enhanced by MESD and/or KREMEN, inhibits beta-catenin signaling by preventing GSK3-mediated phosphorylation of the PPPSP motifs and subsequent, AXIN1 binding. Interacts with MESD; the interaction prevents the formation of LRP5 aggregates, targets LRP5 to the plasma membrane and, when complexed with KREMEN2, increases DKK1 binding. Interacts with CSNK1E. Interacts with SOST; the interaction antagonizes canonical Wnt signaling. Interacts with APCDD1. Interacts with CAPRIN2. Phosphorylation of cytoplasmic PPPSP motifs regulates the signal transduction of the Wnt signaling pathway through acting as a docking site for AXIN1. In terms of tissue distribution, widely expressed, with the highest level of expression in the liver and in aorta.

It is found in the membrane. It localises to the endoplasmic reticulum. Its function is as follows. Acts as a coreceptor with members of the frizzled family of seven-transmembrane spanning receptors to transduce signal by Wnt proteins. Activates the canonical Wnt signaling pathway that controls cell fate determination and self-renewal during embryonic development and adult tissue regeneration. In particular, may play an important role in the development of the posterior patterning of the epiblast during gastrulation. During bone development, regulates osteoblast proliferation and differentiation thus determining bone mass. Mechanistically, the formation of the signaling complex between Wnt ligand, frizzled receptor and LRP5 coreceptor promotes the recruitment of AXIN1 to LRP5, stabilizing beta-catenin/CTNNB1 and activating TCF/LEF-mediated transcriptional programs. Acts as a coreceptor for non-Wnt proteins, such as norrin/NDP. Binding of norrin/NDP to frizzled 4/FZD4-LRP5 receptor complex triggers beta-catenin/CTNNB1-dependent signaling known to be required for retinal vascular development. Plays a role in controlling postnatal vascular regression in retina via macrophage-induced endothelial cell apoptosis. The polypeptide is Low-density lipoprotein receptor-related protein 5 (Homo sapiens (Human)).